Consider the following 164-residue polypeptide: Reticulon-like protein B22 (164 aa).

The Reticulon domain maps to 1–164; it reads MGEMGKAMGL…ILEQEAHSDT (164 aa). The next 2 helical transmembrane spans lie at 30-50 and 117-137; these read SLFSDVFIVLLCSLAILGLLF and LISGVTVAYAGLCLFCLSMLC.

The protein resides in the endoplasmic reticulum membrane. This chain is Reticulon-like protein B22 (RTNLB22), found in Arabidopsis thaliana (Mouse-ear cress).